We begin with the raw amino-acid sequence, 597 residues long: Arginine--tRNA ligase (597 aa).

The 'HIGH' region signature appears at 137–147 (PNIAKEMHVGH).

The protein belongs to the class-I aminoacyl-tRNA synthetase family. In terms of assembly, monomer.

It is found in the cytoplasm. The enzyme catalyses tRNA(Arg) + L-arginine + ATP = L-arginyl-tRNA(Arg) + AMP + diphosphate. In Parasynechococcus marenigrum (strain WH8102), this protein is Arginine--tRNA ligase.